The following is a 483-amino-acid chain: MKAFYAFCVVLLVFGSVSEAKFDDFEDEEDIVEYDDNDFAEFEDVMEDSVTESPQRVISTEDDEDEATVELEGQDESQEGDFEDADTQEGDTESEPYDDEEFEGYEDKPDTSSNKNKDPITIVDVPAHLQNSWESYYLEILMVTGLLAYIMNYIIGKNKNSRLAQAWFNSHRELLESNFTLVGDDGTNKEATSTGKLNQENEHIYNLWCSGRVCCEGMLIQLRFLKRQDLLNVLARMMRPVSDQVQIKVTMNDEDMDTYVFAVGTRKALLRLQKEMQDLSEFCSDKPKSGAKYGLPDSLAILSEMGEVTEGMMDTKMVHFLTHYADKIESVHFSDQFSGPKIMQEEGQPLKLPDTKRTLLFTFNVPGSGNTYPKDMESLLPLMNMVIYSIDKAKKFRLNREGKQKADKNRARVEENFLKLTHVQRQEAAQSRREEKKRAEKERIMNEEDPEKQRRLEEAALRREQKKLEKKQMKMKQIKVKAM.

Positions 1 to 20 are cleaved as a signal peptide; it reads MKAFYAFCVVLLVFGSVSEA. Residues 21–135 are Cytoplasmic-facing; sequence KFDDFEDEED…PAHLQNSWES (115 aa). The segment at 46–119 is disordered; that stretch reads MEDSVTESPQ…DTSSNKNKDP (74 aa). A compositionally biased stretch (acidic residues) spans 60 to 104; the sequence is TEDDEDEATVELEGQDESQEGDFEDADTQEGDTESEPYDDEEFEG. The segment covering 105–118 has biased composition (basic and acidic residues); that stretch reads YEDKPDTSSNKNKD. The chain crosses the membrane as a helical span at residues 136-156; it reads YYLEILMVTGLLAYIMNYIIG. At 157-483 the chain is on the lumenal side; that stretch reads KNKNSRLAQA…KMKQIKVKAM (327 aa). Asn178 carries an N-linked (GlcNAc...) asparagine glycan. The disordered stretch occupies residues 424–483; that stretch reads QRQEAAQSRREEKKRAEKERIMNEEDPEKQRRLEEAALRREQKKLEKKQMKMKQIKVKAM. Residues 430–472 are compositionally biased toward basic and acidic residues; sequence QSRREEKKRAEKERIMNEEDPEKQRRLEEAALRREQKKLEKKQ. A coiled-coil region spans residues 450 to 483; the sequence is PEKQRRLEEAALRREQKKLEKKQMKMKQIKVKAM. Positions 473 to 483 are enriched in basic residues; sequence MKMKQIKVKAM.

This sequence belongs to the CCDC47 family. In terms of assembly, component of the PAT complex, composed of WDR83OS/Asterix and CCDC47. The PAT complex is part of the multi-pass translocon (MPT) complex, composed of three subcomplexes, the GEL complex (composed of RAB5IF/OPTI and TMCO1), the BOS complex (composed of NCLN/Nicalin, NOMO1 and TMEM147) and the PAT complex (composed of WDR83OS/Asterix and CCDC47). The MPT complex associates with the SEC61 complex. Interacts with VCP, HSPA5, DERL1, DERL2 and SELENOS. In the embryo, expressed in the endodermal layer of the yolk sac and in the small intestine.

Its subcellular location is the endoplasmic reticulum membrane. It is found in the rough endoplasmic reticulum membrane. Component of the multi-pass translocon (MPT) complex that mediates insertion of multi-pass membrane proteins into the lipid bilayer of membranes. The MPT complex takes over after the SEC61 complex: following membrane insertion of the first few transmembrane segments of proteins by the SEC61 complex, the MPT complex occludes the lateral gate of the SEC61 complex to promote insertion of subsequent transmembrane regions. Within the MPT complex, the PAT subcomplex sequesters any highly polar regions in the transmembrane domains away from the non-polar membrane environment until they can be buried in the interior of the fully assembled protein. Within the PAT subcomplex, CCDC47 occludes the lateral gate of the SEC61 complex. Involved in the regulation of calcium ion homeostasis in the ER. Required for proper protein degradation via the ERAD (ER-associated degradation) pathway. Has an essential role in the maintenance of ER organization during embryogenesis. This Mus musculus (Mouse) protein is PAT complex subunit CCDC47.